The following is a 61-amino-acid chain: Small ribosomal subunit protein uS14 (61 aa).

Cysteine 24, cysteine 27, cysteine 40, and cysteine 43 together coordinate Zn(2+).

Belongs to the universal ribosomal protein uS14 family. Zinc-binding uS14 subfamily. As to quaternary structure, part of the 30S ribosomal subunit. Contacts proteins S3 and S10. Requires Zn(2+) as cofactor.

Its function is as follows. Binds 16S rRNA, required for the assembly of 30S particles and may also be responsible for determining the conformation of the 16S rRNA at the A site. The polypeptide is Small ribosomal subunit protein uS14 (Ureaplasma parvum serovar 3 (strain ATCC 27815 / 27 / NCTC 11736)).